Here is a 236-residue protein sequence, read N- to C-terminus: L-aspartate dehydrogenase (236 aa).

NAD(+) is bound by residues 10 to 11 (AI), Asp-31, 58 to 59 (AS), Tyr-66, 80 to 81 (LS), Ala-111, and Asn-162. His-189 is an active-site residue. 212 to 215 (NPKT) is an NAD(+) binding site.

The protein belongs to the L-aspartate dehydrogenase family. As to quaternary structure, homodimer.

The enzyme catalyses L-aspartate + NADP(+) + H2O = oxaloacetate + NH4(+) + NADPH + H(+). It carries out the reaction L-aspartate + NAD(+) + H2O = oxaloacetate + NH4(+) + NADH + H(+). The protein operates within cofactor biosynthesis; NAD(+) biosynthesis; iminoaspartate from L-aspartate (dehydrogenase route): step 1/1. Functionally, specifically catalyzes the NAD or NADP-dependent dehydrogenation of L-aspartate to iminoaspartate. This chain is L-aspartate dehydrogenase, found in Archaeoglobus fulgidus (strain ATCC 49558 / DSM 4304 / JCM 9628 / NBRC 100126 / VC-16).